The primary structure comprises 183 residues: Inosine/xanthosine triphosphatase (183 aa).

It belongs to the YjjX NTPase family. Homodimer. Mg(2+) is required as a cofactor. Requires Mn(2+) as cofactor.

The enzyme catalyses XTP + H2O = XDP + phosphate + H(+). It catalyses the reaction ITP + H2O = IDP + phosphate + H(+). Functionally, phosphatase that hydrolyzes non-canonical purine nucleotides such as XTP and ITP to their respective diphosphate derivatives. Probably excludes non-canonical purines from DNA/RNA precursor pool, thus preventing their incorporation into DNA/RNA and avoiding chromosomal lesions. The polypeptide is Inosine/xanthosine triphosphatase (Vibrio cholerae serotype O1 (strain ATCC 39315 / El Tor Inaba N16961)).